We begin with the raw amino-acid sequence, 187 residues long: Large ribosomal subunit protein eL18B (187 aa).

Thr-134 is subject to Phosphothreonine. A Phosphoserine modification is found at Ser-136.

Belongs to the eukaryotic ribosomal protein eL18 family. As to quaternary structure, component of the large ribosomal subunit (LSU). Mature yeast ribosomes consist of a small (40S) and a large (60S) subunit. The 40S small subunit contains 1 molecule of ribosomal RNA (18S rRNA) and at least 33 different proteins. The large 60S subunit contains 3 rRNA molecules (25S, 5.8S and 5S rRNA) and at least 46 different proteins. eL18 interacts with NAP1.

The protein resides in the cytoplasm. In terms of biological role, component of the ribosome, a large ribonucleoprotein complex responsible for the synthesis of proteins in the cell. The small ribosomal subunit (SSU) binds messenger RNAs (mRNAs) and translates the encoded message by selecting cognate aminoacyl-transfer RNA (tRNA) molecules. The large subunit (LSU) contains the ribosomal catalytic site termed the peptidyl transferase center (PTC), which catalyzes the formation of peptide bonds, thereby polymerizing the amino acids delivered by tRNAs into a polypeptide chain. The nascent polypeptides leave the ribosome through a tunnel in the LSU and interact with protein factors that function in enzymatic processing, targeting, and the membrane insertion of nascent chains at the exit of the ribosomal tunnel. The protein is Large ribosomal subunit protein eL18B (rpl1802) of Schizosaccharomyces pombe (strain 972 / ATCC 24843) (Fission yeast).